Here is a 240-residue protein sequence, read N- to C-terminus: DNA repair protein RecO (240 aa).

It belongs to the RecO family.

Its function is as follows. Involved in DNA repair and RecF pathway recombination. The polypeptide is DNA repair protein RecO (Xanthomonas oryzae pv. oryzae (strain MAFF 311018)).